The sequence spans 93 residues: Large ribosomal subunit protein bL27 (93 aa).

Residues 1–9 (MIKINLQLF) constitute a propeptide that is removed on maturation.

Belongs to the bacterial ribosomal protein bL27 family. In terms of processing, the N-terminus is cleaved by ribosomal processing cysteine protease Prp.

In Ruminiclostridium cellulolyticum (strain ATCC 35319 / DSM 5812 / JCM 6584 / H10) (Clostridium cellulolyticum), this protein is Large ribosomal subunit protein bL27.